Reading from the N-terminus, the 676-residue chain is Methionine--tRNA ligase (676 aa).

The short motif at 11-21 is the 'HIGH' region element; sequence PYANGPCHLGH. Positions 143, 146, 156, and 159 each coordinate Zn(2+). Positions 326-330 match the 'KMSKS' region motif; that stretch reads KMSTS. Residue threonine 329 coordinates ATP. In terms of domain architecture, tRNA-binding spans 581–676; that stretch reads EFGKVKLVVG…TEGNVGEYIK (96 aa).

Belongs to the class-I aminoacyl-tRNA synthetase family. MetG type 1 subfamily. In terms of assembly, homodimer. The cofactor is Zn(2+).

The protein localises to the cytoplasm. The enzyme catalyses tRNA(Met) + L-methionine + ATP = L-methionyl-tRNA(Met) + AMP + diphosphate. Functionally, is required not only for elongation of protein synthesis but also for the initiation of all mRNA translation through initiator tRNA(fMet) aminoacylation. This is Methionine--tRNA ligase from Methanosphaera stadtmanae (strain ATCC 43021 / DSM 3091 / JCM 11832 / MCB-3).